A 145-amino-acid polypeptide reads, in one-letter code: Deoxyuridine 5'-triphosphate nucleotidohydrolase (145 aa).

Residues 63-65 (RSG), glutamine 76, and 80-82 (TVD) contribute to the substrate site.

This sequence belongs to the dUTPase family. The cofactor is Mg(2+).

The catalysed reaction is dUTP + H2O = dUMP + diphosphate + H(+). It participates in pyrimidine metabolism; dUMP biosynthesis; dUMP from dCTP (dUTP route): step 2/2. In terms of biological role, this enzyme is involved in nucleotide metabolism: it produces dUMP, the immediate precursor of thymidine nucleotides and it decreases the intracellular concentration of dUTP so that uracil cannot be incorporated into DNA. This Chlamydia trachomatis serovar L2 (strain ATCC VR-902B / DSM 19102 / 434/Bu) protein is Deoxyuridine 5'-triphosphate nucleotidohydrolase.